Here is a 402-residue protein sequence, read N- to C-terminus: UDP-glucose 6-dehydrogenase (402 aa).

Residues K2 to L19, V11, D29, K34, T83, T118, and E145 contribute to the NAD(+) site. Residues E141 to E145, K204, N208, Y249 to S253, and G257 each bind substrate. Y259 is a binding site for NAD(+). C260 (nucleophile) is an active-site residue. K263 contacts NAD(+). Substrate is bound at residue K320. NAD(+) is bound at residue R327.

This sequence belongs to the UDP-glucose/GDP-mannose dehydrogenase family.

It carries out the reaction UDP-alpha-D-glucose + 2 NAD(+) + H2O = UDP-alpha-D-glucuronate + 2 NADH + 3 H(+). It participates in nucleotide-sugar biosynthesis; UDP-alpha-D-glucuronate biosynthesis; UDP-alpha-D-glucuronate from UDP-alpha-D-glucose: step 1/1. Functionally, catalyzes the formation of UDP-glucuronic acid which is required for capsular hyaluronic acid synthesis. The sequence is that of UDP-glucose 6-dehydrogenase (hasB) from Streptococcus pyogenes serotype M1.